The sequence spans 104 residues: L-rhamnose mutarotase (104 aa).

Y18 contributes to the substrate binding site. The active-site Proton donor is the H22. Substrate contacts are provided by residues Y41 and 76 to 77 (WW).

Belongs to the rhamnose mutarotase family. Homodimer.

The protein localises to the cytoplasm. It carries out the reaction alpha-L-rhamnose = beta-L-rhamnose. Its pathway is carbohydrate metabolism; L-rhamnose metabolism. Its function is as follows. Involved in the anomeric conversion of L-rhamnose. The chain is L-rhamnose mutarotase from Burkholderia orbicola (strain MC0-3).